An 86-amino-acid polypeptide reads, in one-letter code: RNA-binding protein Hfq (86 aa).

In terms of domain architecture, Sm spans 9–68 (DPYLNTLRKEKVPVSIYLVNGIKLQGSIESFDQFVVLLKNTVSQMVYKHAISTVVPARPV). The disordered stretch occupies residues 67–86 (PVRLPSPTDGEHGDSEPGNA). The span at 75–86 (DGEHGDSEPGNA) shows a compositional bias: basic and acidic residues.

This sequence belongs to the Hfq family. In terms of assembly, homohexamer.

RNA chaperone that binds small regulatory RNA (sRNAs) and mRNAs to facilitate mRNA translational regulation in response to envelope stress, environmental stress and changes in metabolite concentrations. Also binds with high specificity to tRNAs. In Pseudomonas putida (strain GB-1), this protein is RNA-binding protein Hfq.